We begin with the raw amino-acid sequence, 274 residues long: tRNA-cytidine(32) 2-sulfurtransferase (274 aa).

The short motif at 40 to 45 (SGGKDS) is the PP-loop motif element. Positions 115, 118, and 206 each coordinate [4Fe-4S] cluster.

The protein belongs to the TtcA family. In terms of assembly, homodimer. The cofactor is Mg(2+). It depends on [4Fe-4S] cluster as a cofactor.

It is found in the cytoplasm. It catalyses the reaction cytidine(32) in tRNA + S-sulfanyl-L-cysteinyl-[cysteine desulfurase] + AH2 + ATP = 2-thiocytidine(32) in tRNA + L-cysteinyl-[cysteine desulfurase] + A + AMP + diphosphate + H(+). The protein operates within tRNA modification. Functionally, catalyzes the ATP-dependent 2-thiolation of cytidine in position 32 of tRNA, to form 2-thiocytidine (s(2)C32). The sulfur atoms are provided by the cysteine/cysteine desulfurase (IscS) system. This is tRNA-cytidine(32) 2-sulfurtransferase from Stutzerimonas stutzeri (strain A1501) (Pseudomonas stutzeri).